Consider the following 368-residue polypeptide: CST complex subunit STN1 (368 aa).

An interaction with CTC1 region spans residues 1 to 185 (MQPGSSRCEE…KVYDQPFHSS (185 aa)). A DNA-binding region (OB) is located at residues 57–155 (VDVLGTVIGV…EIHATTYYKV (99 aa)). 2 winged helix-turn-helix (wHTH) regions span residues 191 to 295 (EALS…YVTR) and 296 to 368 (EDKD…YTAF).

This sequence belongs to the STN1 family. Component of the CST complex, composed of TEN1/C17orf106, CTC1/C17orf68 and STN1; in the complex interacts directly with TEN1 and CTC1. Interacts with ACD/TPP1, POT1 and POLA1.

The protein localises to the nucleus. It localises to the chromosome. It is found in the telomere. In terms of biological role, component of the CST complex proposed to act as a specialized replication factor promoting DNA replication under conditions of replication stress or natural replication barriers such as the telomere duplex. The CST complex binds single-stranded DNA with high affinity in a sequence-independent manner, while isolated subunits bind DNA with low affinity by themselves. Initially the CST complex has been proposed to protect telomeres from DNA degradation. However, the CST complex has been shown to be involved in several aspects of telomere replication. The CST complex inhibits telomerase and is involved in telomere length homeostasis; it is proposed to bind to newly telomerase-synthesized 3' overhangs and to terminate telomerase action implicating the association with the ACD:POT1 complex thus interfering with its telomerase stimulation activity. The CST complex is also proposed to be involved in fill-in synthesis of the telomeric C-strand probably implicating recruitment and activation of DNA polymerase alpha. The CST complex facilitates recovery from many forms of exogenous DNA damage; seems to be involved in the re-initiation of DNA replication at repaired forks and/or dormant origins. Required for efficicient replication of the duplex region of the telomere. Promotes efficient replication of lagging-strand telomeres. Promotes general replication start following replication-fork stalling implicating new origin firing. May be in involved in C-strand fill-in during late S/G2 phase independent of its role in telomere duplex replication. Functionally, component of the CST complex, a complex that binds to single-stranded DNA and is required to protect telomeres from DNA degradation. The CST complex binds single-stranded DNA with high affinity in a sequence-independent manner, while isolated subunits bind DNA with low affinity by themselves. In addition to telomere protection, the CST complex has probably a more general role in DNA metabolism at non-telomeric sites. This chain is CST complex subunit STN1, found in Homo sapiens (Human).